The sequence spans 332 residues: Fructose-1,6-bisphosphatase class 1 (332 aa).

The Mg(2+) site is built by Glu-89, Asp-110, Leu-112, and Asp-113. Substrate-binding positions include 113–116 (DGSS), Asn-206, Tyr-239, 257–259 (YLY), and Lys-269. A Mg(2+)-binding site is contributed by Glu-275.

This sequence belongs to the FBPase class 1 family. In terms of assembly, homotetramer. Mg(2+) is required as a cofactor.

It localises to the cytoplasm. It catalyses the reaction beta-D-fructose 1,6-bisphosphate + H2O = beta-D-fructose 6-phosphate + phosphate. Its pathway is carbohydrate biosynthesis; gluconeogenesis. This chain is Fructose-1,6-bisphosphatase class 1, found in Salmonella typhi.